An 89-amino-acid polypeptide reads, in one-letter code: Small ribosomal subunit protein uS15 (89 aa).

This sequence belongs to the universal ribosomal protein uS15 family. As to quaternary structure, part of the 30S ribosomal subunit. Forms a bridge to the 50S subunit in the 70S ribosome, contacting the 23S rRNA.

Functionally, one of the primary rRNA binding proteins, it binds directly to 16S rRNA where it helps nucleate assembly of the platform of the 30S subunit by binding and bridging several RNA helices of the 16S rRNA. In terms of biological role, forms an intersubunit bridge (bridge B4) with the 23S rRNA of the 50S subunit in the ribosome. This Sulfurovum sp. (strain NBC37-1) protein is Small ribosomal subunit protein uS15.